Here is a 318-residue protein sequence, read N- to C-terminus: Taste receptor type 2 member 117 (318 aa).

Topologically, residues 1 to 16 are extracellular; the sequence is MQHNLKTIFVISHSTL. A helical transmembrane segment spans residues 17-37; the sequence is TIILFTELVTGIIGNGFMALV. The Cytoplasmic segment spans residues 38–53; sequence HCMDWLRRKKISLVNQ. Residues 54–74 form a helical membrane-spanning segment; that stretch reads ILTALAISRIFQLCLLFISLV. The Extracellular portion of the chain corresponds to 75–93; sequence ISFSYPDLTTTSLIKVTCN. A helical transmembrane segment spans residues 94–114; sequence LWIIVNHFNIWLATCLGIFYF. At 115 to 134 the chain is on the cytoplasmic side; the sequence is LKISNFSNSLFLYLKWRVEK. A helical transmembrane segment spans residues 135-155; the sequence is VVLVTLLVSLVLLTLNSLLIN. The Extracellular segment spans residues 156-189; the sequence is LEINICINEYQRNITYSFNSYYHANCHRQMLSLH. An N-linked (GlcNAc...) asparagine glycan is attached at asparagine 168. The helical transmembrane segment at 190–210 threads the bilayer; the sequence is IIFLSVPFVLSLSTFLLLIFS. At 211 to 238 the chain is on the cytoplasmic side; the sequence is LGTHHKKMQQHVQGRRDASTMAHFKALQ. Residues 239–259 form a helical membrane-spanning segment; the sequence is TVIAFLLLYSIFILSVLVQIW. At 260–268 the chain is on the extracellular side; it reads KYELLKKNL. Residues 269-289 traverse the membrane as a helical segment; the sequence is FILFCQVAYVAFPSFHSYILI. The Cytoplasmic segment spans residues 290–318; that stretch reads LGDMKMRQACLSVLWWQKFRKNYVEPLDL.

The protein belongs to the G-protein coupled receptor T2R family.

Its subcellular location is the membrane. Putative taste receptor which may play a role in the perception of bitterness. The protein is Taste receptor type 2 member 117 of Rattus norvegicus (Rat).